The following is a 121-amino-acid chain: Non-structural protein 8 (121 aa).

The first 15 residues, 1–15 (MKLLIVFGLLTSVYC), serve as a signal peptide directing secretion. The SARS ORF8 Ig-like domain maps to 19–121 (ECSIQECCEN…HDVRVVLDFV (103 aa)). 3 cysteine pairs are disulfide-bonded: C25–C90, C37–C102, and C61–C83.

The protein is Non-structural protein 8 of Bat coronavirus Rp3/2004 (BtCoV/Rp3/2004).